We begin with the raw amino-acid sequence, 253 residues long: N-acetylmuramoyl-L-alanine amidase CwlM (253 aa).

Residues 4–172 (IFIDPGHGGS…IARGHANGLA (169 aa)) enclose the MurNAc-LAA domain. The SPOR domain occupies 179–253 (KNAAALYKVQ…AEFDTFIYQE (75 aa)). Tandem repeats lie at residues 184–219 (LYKV…YRDS) and 220–253 (LYKV…IYQE). Residues 184-253 (LYKVQIAAFR…AEFDTFIYQE (70 aa)) are 2 X 35 AA approximate tandem repeats.

It belongs to the N-acetylmuramoyl-L-alanine amidase 3 family.

The protein resides in the secreted. The catalysed reaction is Hydrolyzes the link between N-acetylmuramoyl residues and L-amino acid residues in certain cell-wall glycopeptides.. In terms of biological role, hydrolyzes the cell wall of M.luteus more efficiently than that of B.licheniformis and B.subtilis. The C-terminal region, including the repeats, determines substrate specificity. The protein is N-acetylmuramoyl-L-alanine amidase CwlM (cwlM) of Bacillus licheniformis.